The following is a 179-amino-acid chain: Large ribosomal subunit protein uL10 (179 aa).

Belongs to the universal ribosomal protein uL10 family. Part of the ribosomal stalk of the 50S ribosomal subunit. The N-terminus interacts with L11 and the large rRNA to form the base of the stalk. The C-terminus forms an elongated spine to which L12 dimers bind in a sequential fashion forming a multimeric L10(L12)X complex.

Forms part of the ribosomal stalk, playing a central role in the interaction of the ribosome with GTP-bound translation factors. In Kosmotoga olearia (strain ATCC BAA-1733 / DSM 21960 / TBF 19.5.1), this protein is Large ribosomal subunit protein uL10.